Here is a 539-residue protein sequence, read N- to C-terminus: MHDKVLILDFGSQVTQLIARRVREAHVYCEIHPNDVSDAFVREFAPKAIILSGSHASTYEDHQLRAPQAVWDLGVPVLGICYGMQTMAVQLGGKVEWSDHREFGYAEVRAHGHTRLLKDIQDFATPEGHGMLKVWMSHGDKVTELPPGFKLLASTPSCPVAGMADEARGYYAVQFHPEVTHTVQGRALLERFVLEIAGAKPDWVMRDHIDEAVKAIREQVGDEEVILGLSGGVDSSVAAALIHRAIGDQLTCVFVDHGLLRLDEGKMVMDMFAGRLHAKVVHVDASEQFLGHLAGVTDPEAKRKIIGREFVEVFQAEAKKLSNAKWLAQGTIYPDVVESGGTKTKKATTIKSHHNVGGLPETLGLKLLEPLRDLFKDEVRELGVALGLPHEMVYRHPFPGPGLGVRILGEVKREYADLLRRADAIFIEELRGTKATAQDAAAGLCGEGDVGKSWYDLTSQAFAVFLPIKSVGVMGDGRTYDYVTALRAVQTTDFMTAHWAHLPYALLGRVSNRIINEVRGLSRVVYDVSGKPPATIEWE.

In terms of domain architecture, Glutamine amidotransferase type-1 spans 4-202 (KVLILDFGSQ…VLEIAGAKPD (199 aa)). Cysteine 81 acts as the Nucleophile in catalysis. Catalysis depends on residues histidine 176 and glutamate 178. Positions 203 to 395 (WVMRDHIDEA…LGLPHEMVYR (193 aa)) constitute a GMPS ATP-PPase domain. Residue 230–236 (SGGVDSS) participates in ATP binding.

As to quaternary structure, homodimer.

It carries out the reaction XMP + L-glutamine + ATP + H2O = GMP + L-glutamate + AMP + diphosphate + 2 H(+). Its pathway is purine metabolism; GMP biosynthesis; GMP from XMP (L-Gln route): step 1/1. Functionally, catalyzes the synthesis of GMP from XMP. This chain is GMP synthase [glutamine-hydrolyzing], found in Ralstonia pickettii (strain 12J).